The sequence spans 136 residues: Peptide methionine sulfoxide reductase MsrB (136 aa).

Residues 6–128 enclose the MsrB domain; the sequence is EVSLYKELTD…NSAALSFTDE (123 aa). Zn(2+) is bound by residues cysteine 45, cysteine 48, cysteine 94, and cysteine 97. Catalysis depends on cysteine 117, which acts as the Nucleophile.

This sequence belongs to the MsrB Met sulfoxide reductase family. Requires Zn(2+) as cofactor.

The enzyme catalyses L-methionyl-[protein] + [thioredoxin]-disulfide + H2O = L-methionyl-(R)-S-oxide-[protein] + [thioredoxin]-dithiol. The protein is Peptide methionine sulfoxide reductase MsrB of Photorhabdus laumondii subsp. laumondii (strain DSM 15139 / CIP 105565 / TT01) (Photorhabdus luminescens subsp. laumondii).